The following is a 228-amino-acid chain: Upstream activation factor subunit UAF30 (228 aa).

Positions 1–56 (MAELNDYSTMIDILLSDMDLETVTTKKVRMALKEVYAIDVESQGKAINKLIRKHLD) constitute a DEK-C domain. The segment covering 89–111 (SKRSSGEEKNDSETKGTHVEKKK) has biased composition (basic and acidic residues). Residues 89–118 (SKRSSGEEKNDSETKGTHVEKKKGTVSKSP) are disordered. Residues 119 to 195 (ISTRKVTLSK…HKILASHMTE (77 aa)) enclose the SWIB/MDM2 domain. The tract at residues 209–228 (VRRKEKPIVSDSEQSDTKGI) is disordered. Residues Ser218, Ser220, and Ser223 each carry the phosphoserine modification.

As to quaternary structure, component of the UAF (upstream activation factor) complex which consists of UAF30, RRN5, RRN9, RRN10, and histones H3 and H4.

It localises to the nucleus. The protein localises to the nucleolus. In terms of biological role, nonessential component of the UAF (upstream activation factor) complex which interacts with the upstream element of the RNA polymerase I promoter and forms a stable preinitiation complex. Together with SPT15/TBP UAF seems to stimulate basal transcription to a fully activated level. UAF30 seems to play a role in silencing transcription by RNA polymerase II. In Saccharomyces cerevisiae (strain ATCC 204508 / S288c) (Baker's yeast), this protein is Upstream activation factor subunit UAF30 (UAF30).